The sequence spans 36 residues: Photosystem II reaction center protein M (36 aa).

A helical membrane pass occupies residues 5–25 (ILGVIATALFIIIPTSFLLIL).

It belongs to the PsbM family. As to quaternary structure, PSII is composed of 1 copy each of membrane proteins PsbA, PsbB, PsbC, PsbD, PsbE, PsbF, PsbH, PsbI, PsbJ, PsbK, PsbL, PsbM, PsbT, PsbX, PsbY, PsbZ, Psb30/Ycf12, at least 3 peripheral proteins of the oxygen-evolving complex and a large number of cofactors. It forms dimeric complexes.

Its subcellular location is the plastid. It is found in the chloroplast thylakoid membrane. Functionally, one of the components of the core complex of photosystem II (PSII). PSII is a light-driven water:plastoquinone oxidoreductase that uses light energy to abstract electrons from H(2)O, generating O(2) and a proton gradient subsequently used for ATP formation. It consists of a core antenna complex that captures photons, and an electron transfer chain that converts photonic excitation into a charge separation. This subunit is found at the monomer-monomer interface. This is Photosystem II reaction center protein M from Chlorella vulgaris (Green alga).